The sequence spans 867 residues: Alanine--tRNA ligase (867 aa).

4 residues coordinate Zn(2+): H556, H560, C658, and H662.

This sequence belongs to the class-II aminoacyl-tRNA synthetase family. The cofactor is Zn(2+).

It is found in the cytoplasm. The enzyme catalyses tRNA(Ala) + L-alanine + ATP = L-alanyl-tRNA(Ala) + AMP + diphosphate. Functionally, catalyzes the attachment of alanine to tRNA(Ala) in a two-step reaction: alanine is first activated by ATP to form Ala-AMP and then transferred to the acceptor end of tRNA(Ala). Also edits incorrectly charged Ser-tRNA(Ala) and Gly-tRNA(Ala) via its editing domain. The chain is Alanine--tRNA ligase from Fusobacterium nucleatum subsp. nucleatum (strain ATCC 25586 / DSM 15643 / BCRC 10681 / CIP 101130 / JCM 8532 / KCTC 2640 / LMG 13131 / VPI 4355).